The chain runs to 1093 residues: Leucine-rich repeats and immunoglobulin-like domains protein 1 (1093 aa).

An N-terminal signal peptide occupies residues 1 to 34 (MARPVRGGLGAPRRSPCLLLLWLLLLRLEPVTAA). Residues 35-68 (AGPRAPCAAACTCAGDSLDCGGRGLAALPGDLPS) form the LRRNT domain. At 35-794 (AGPRAPCAAA…GCRKDGTTVG (760 aa)) the chain is on the extracellular side. Cys45 and Cys54 are disulfide-bonded. LRR repeat units lie at residues 69–90 (WTRSLNLSYNKLSEIDPAGFED), 93–114 (NLQEVYLNNNELTAVPSLGAAS), 116–137 (HVVSLFLQHNKIRSVEGSQLKA), 140–161 (SLEVLDLSLNNITEVRNTCFPH), 164–185 (PIKELNLAGNRIGTLELGAFDG), 189–210 (SLLTLRLSKNRITQLPVRAFKL), 212–233 (RLTQLDLNRNRIRLIEGLTFQG), 236–257 (SLEVLKLQRNNISKLTDGAFWG), 260–281 (KMHVLHLEYNSLVEVNSGSLYG), 284–305 (ALHQLHLSNNSIARIHRKGWSF), 308–329 (KLHELVLSFNNLTRLDEESLAE), 332–353 (SLSVLRLSHNSISHIAEGAFKG), 356–378 (SLRVLDLDHNEISGTIEDTSGAF), 383–404 (SLSKLTLFGNKIKSVAKRAFSG), and 407–428 (GLEHLNLGGNAIRSVQFDAFVK). The N-linked (GlcNAc...) asparagine glycan is linked to Asn74. An N-linked (GlcNAc...) asparagine glycan is attached at Asn150. An N-linked (GlcNAc...) asparagine glycan is attached at Asn246. 2 N-linked (GlcNAc...) asparagine glycosylation sites follow: Asn292 and Asn318. Residues 440–491 (DSFLCDCQLKWLPPWLIGRMLQAFVTATCAHPESLKGQSIFSVPPESFVCDD) enclose the LRRCT domain. 4 disulfides stabilise this stretch: Cys444-Cys468, Cys446-Cys489, Cys516-Cys577, and Cys620-Cys672. Ig-like C2-type domains are found at residues 495–594 (PQII…ARLT), 599–688 (PSFT…ATLT), and 693–779 (PSLV…SQLS). Asn684 is a glycosylation site (N-linked (GlcNAc...) asparagine). An intrachain disulfide couples Cys714 to Cys763. A helical membrane pass occupies residues 795–815 (IFTIAVVSSIVLTSLVWVCII). Residues 816-1093 (YQTRKKSEEY…RVPLLLAPKS (278 aa)) lie on the Cytoplasmic side of the membrane. Disordered regions lie at residues 946–983 (AFHPQPVSRDSAQPSAPNGPEPGGSDQEHSPHHQCSRT) and 1063–1093 (PKACDASPESTPLTGQLPGKQRVPLLLAPKS).

Interacts (via extracellular LRR and Ig-like domains) with EGFR/ERBB1, ERBB2, ERBB3 and ERBB4 (via extracellular domain). The physiological relevance of the interaction is controversial; LRIG1 may have low affinity for EGFR, and interaction may occur only when high levels of both proteins are present. Widely expressed.

It localises to the cell membrane. Acts as a feedback negative regulator of signaling by receptor tyrosine kinases, through a mechanism that involves enhancement of receptor ubiquitination and accelerated intracellular degradation. In Homo sapiens (Human), this protein is Leucine-rich repeats and immunoglobulin-like domains protein 1.